The primary structure comprises 147 residues: Large ribosomal subunit protein uL15 (147 aa).

The segment at Met1–Leu57 is disordered. 2 stretches are compositionally biased toward gly residues: residues Arg21–Ala31 and Ser42–Gly52.

The protein belongs to the universal ribosomal protein uL15 family. Part of the 50S ribosomal subunit.

Functionally, binds to the 23S rRNA. The sequence is that of Large ribosomal subunit protein uL15 from Desulfosudis oleivorans (strain DSM 6200 / JCM 39069 / Hxd3) (Desulfococcus oleovorans).